The following is a 123-amino-acid chain: Holo-[acyl-carrier-protein] synthase (123 aa).

Residues Asp8 and Glu56 each coordinate Mg(2+).

Belongs to the P-Pant transferase superfamily. AcpS family. Mg(2+) is required as a cofactor.

Its subcellular location is the cytoplasm. The enzyme catalyses apo-[ACP] + CoA = holo-[ACP] + adenosine 3',5'-bisphosphate + H(+). Functionally, transfers the 4'-phosphopantetheine moiety from coenzyme A to a Ser of acyl-carrier-protein. In Clostridium botulinum (strain Eklund 17B / Type B), this protein is Holo-[acyl-carrier-protein] synthase.